Reading from the N-terminus, the 538-residue chain is CTP synthase (538 aa).

The interval 1–266 is amidoligase domain; it reads MRTKYIFITG…DQKIVDLLNI (266 aa). Position 14 (S14) interacts with CTP. S14 contacts UTP. Residues 15-20 and D72 each bind ATP; that span reads SLGKGL. 2 residues coordinate Mg(2+): D72 and E140. Residues 147–149, 187–192, and K223 each bind CTP; these read DIE and KTKPTQ. UTP is bound by residues 187 to 192 and K223; that span reads KTKPTQ. 239–241 contacts ATP; sequence KDV. One can recognise a Glutamine amidotransferase type-1 domain in the interval 291–533; it reads NIAIVGKYVN…IEAALRYRKK (243 aa). G353 serves as a coordination point for L-glutamine. Catalysis depends on C380, which acts as the Nucleophile; for glutamine hydrolysis. L-glutamine-binding positions include 381-384, E404, and R461; that span reads LGMQ. Catalysis depends on residues H506 and E508.

The protein belongs to the CTP synthase family. Homotetramer.

The catalysed reaction is UTP + L-glutamine + ATP + H2O = CTP + L-glutamate + ADP + phosphate + 2 H(+). It catalyses the reaction L-glutamine + H2O = L-glutamate + NH4(+). It carries out the reaction UTP + NH4(+) + ATP = CTP + ADP + phosphate + 2 H(+). It functions in the pathway pyrimidine metabolism; CTP biosynthesis via de novo pathway; CTP from UDP: step 2/2. Allosterically activated by GTP, when glutamine is the substrate; GTP has no effect on the reaction when ammonia is the substrate. The allosteric effector GTP functions by stabilizing the protein conformation that binds the tetrahedral intermediate(s) formed during glutamine hydrolysis. Inhibited by the product CTP, via allosteric rather than competitive inhibition. Catalyzes the ATP-dependent amination of UTP to CTP with either L-glutamine or ammonia as the source of nitrogen. Regulates intracellular CTP levels through interactions with the four ribonucleotide triphosphates. The sequence is that of CTP synthase from Syntrophus aciditrophicus (strain SB).